A 664-amino-acid polypeptide reads, in one-letter code: UvrABC system protein B (664 aa).

A Helicase ATP-binding domain is found at 23 to 180; sequence EGLNRGMRFQ…EKLAKIGYQR (158 aa). 36 to 43 contributes to the ATP binding site; sequence GVTGSGKT. Residues 89–112 carry the Beta-hairpin motif; that stretch reads YYDYYQPEAYIPTKDLYIEKNADI. In terms of domain architecture, Helicase C-terminal spans 426–588; it reads QVDDLINEIV…ITPRSIVKPL (163 aa). One can recognise a UVR domain in the interval 622–657; it reads EEYVALLEEEMYRAASELRYEDAAALRDELFRVKET.

The protein belongs to the UvrB family. In terms of assembly, forms a heterotetramer with UvrA during the search for lesions. Interacts with UvrC in an incision complex.

The protein resides in the cytoplasm. In terms of biological role, the UvrABC repair system catalyzes the recognition and processing of DNA lesions. A damage recognition complex composed of 2 UvrA and 2 UvrB subunits scans DNA for abnormalities. Upon binding of the UvrA(2)B(2) complex to a putative damaged site, the DNA wraps around one UvrB monomer. DNA wrap is dependent on ATP binding by UvrB and probably causes local melting of the DNA helix, facilitating insertion of UvrB beta-hairpin between the DNA strands. Then UvrB probes one DNA strand for the presence of a lesion. If a lesion is found the UvrA subunits dissociate and the UvrB-DNA preincision complex is formed. This complex is subsequently bound by UvrC and the second UvrB is released. If no lesion is found, the DNA wraps around the other UvrB subunit that will check the other stand for damage. This chain is UvrABC system protein B, found in Thermotoga neapolitana (strain ATCC 49049 / DSM 4359 / NBRC 107923 / NS-E).